The sequence spans 211 residues: MNGILISLEGPDGAGKTTVLQEILPEIQKMKREVVPTREPGGVRVAEEIRQIILDPKNTEIDSKTELMLFEAARRLHMQEKMLPALRAGKVVIVDRFIDSSVAYQGYGRDLGVEVVDWLNYFATDGLKPDLTLYFDIDTDVALERIMKNRADEVNRLDLERAEMHRKVREGYLEIVAKEPERFVKIDASQSLEKVVADTLEVLKKRFVSEF.

G10–T17 is a binding site for ATP.

This sequence belongs to the thymidylate kinase family.

The catalysed reaction is dTMP + ATP = dTDP + ADP. In terms of biological role, phosphorylation of dTMP to form dTDP in both de novo and salvage pathways of dTTP synthesis. The sequence is that of Thymidylate kinase from Lactococcus lactis subsp. cremoris (strain SK11).